The chain runs to 381 residues: Succinyl-diaminopimelate desuccinylase (381 aa).

Residue histidine 68 participates in Zn(2+) binding. Residue aspartate 70 is part of the active site. Position 101 (aspartate 101) interacts with Zn(2+). Glutamate 135 serves as the catalytic Proton acceptor. 3 residues coordinate Zn(2+): glutamate 136, glutamate 164, and histidine 350.

This sequence belongs to the peptidase M20A family. DapE subfamily. In terms of assembly, homodimer. Requires Zn(2+) as cofactor. Co(2+) serves as cofactor.

It carries out the reaction N-succinyl-(2S,6S)-2,6-diaminopimelate + H2O = (2S,6S)-2,6-diaminopimelate + succinate. It functions in the pathway amino-acid biosynthesis; L-lysine biosynthesis via DAP pathway; LL-2,6-diaminopimelate from (S)-tetrahydrodipicolinate (succinylase route): step 3/3. Catalyzes the hydrolysis of N-succinyl-L,L-diaminopimelic acid (SDAP), forming succinate and LL-2,6-diaminopimelate (DAP), an intermediate involved in the bacterial biosynthesis of lysine and meso-diaminopimelic acid, an essential component of bacterial cell walls. This Neisseria gonorrhoeae (strain NCCP11945) protein is Succinyl-diaminopimelate desuccinylase.